A 129-amino-acid chain; its full sequence is Large ribosomal subunit protein uL22 (129 aa).

This sequence belongs to the universal ribosomal protein uL22 family. Part of the 50S ribosomal subunit.

This protein binds specifically to 23S rRNA; its binding is stimulated by other ribosomal proteins, e.g. L4, L17, and L20. It is important during the early stages of 50S assembly. It makes multiple contacts with different domains of the 23S rRNA in the assembled 50S subunit and ribosome. Its function is as follows. The globular domain of the protein is located near the polypeptide exit tunnel on the outside of the subunit, while an extended beta-hairpin is found that lines the wall of the exit tunnel in the center of the 70S ribosome. In Prochlorococcus marinus (strain MIT 9211), this protein is Large ribosomal subunit protein uL22.